A 463-amino-acid polypeptide reads, in one-letter code: tRNA-2-methylthio-N(6)-dimethylallyladenosine synthase (463 aa).

The 121-residue stretch at 5 to 125 (RKLHIKSYGC…LPQLLAKAEQ (121 aa)) folds into the MTTase N-terminal domain. [4Fe-4S] cluster is bound by residues cysteine 14, cysteine 50, cysteine 88, cysteine 166, cysteine 170, and cysteine 173. Positions 152–384 (RARGISAFVT…QQLIDQQQSA (233 aa)) constitute a Radical SAM core domain. One can recognise a TRAM domain in the interval 387 to 449 (KAAIGRTVEV…RYSLLGELAS (63 aa)).

Belongs to the methylthiotransferase family. MiaB subfamily. As to quaternary structure, monomer. Requires [4Fe-4S] cluster as cofactor.

The protein resides in the cytoplasm. It catalyses the reaction N(6)-dimethylallyladenosine(37) in tRNA + (sulfur carrier)-SH + AH2 + 2 S-adenosyl-L-methionine = 2-methylsulfanyl-N(6)-dimethylallyladenosine(37) in tRNA + (sulfur carrier)-H + 5'-deoxyadenosine + L-methionine + A + S-adenosyl-L-homocysteine + 2 H(+). Catalyzes the methylthiolation of N6-(dimethylallyl)adenosine (i(6)A), leading to the formation of 2-methylthio-N6-(dimethylallyl)adenosine (ms(2)i(6)A) at position 37 in tRNAs that read codons beginning with uridine. The sequence is that of tRNA-2-methylthio-N(6)-dimethylallyladenosine synthase from Rhodopseudomonas palustris (strain ATCC BAA-98 / CGA009).